A 255-amino-acid chain; its full sequence is MNTARLNQGTPLLLNAVSKHYAENIVLNQLDLHIPAGQFVAVVGRSGGGKSTLLRLLAGLETPTAGDVLAGTTPLAEIQEDTRMMFQDARLLPWKSVIDNVGLGLKGQWRDAARRALAAVGLENRAGEWPAALSGGQKQRVALARALIHRPGLLLLDEPLGALDALTRLEMQDLIVSLWQEHGFTVLLVTHDVSEAVAMADRVLLIEEGKIGLDLTVDIPRPRRLGSVRLAELEAEVLQRVMQRGESETRLRKQG.

The ABC transporter domain occupies 12–233 (LLLNAVSKHY…RLGSVRLAEL (222 aa)). Residue 44 to 51 (GRSGGGKS) participates in ATP binding.

Belongs to the ABC transporter superfamily. Aliphatic sulfonates importer (TC 3.A.1.17.2) family. The complex is composed of two ATP-binding proteins (SsuB), two transmembrane proteins (SsuC) and a solute-binding protein (SsuA).

The protein resides in the cell inner membrane. It carries out the reaction ATP + H2O + aliphatic sulfonate-[sulfonate-binding protein]Side 1 = ADP + phosphate + aliphatic sulfonateSide 2 + [sulfonate-binding protein]Side 1.. Functionally, part of the ABC transporter complex SsuABC involved in aliphatic sulfonates import. Responsible for energy coupling to the transport system. The protein is Aliphatic sulfonates import ATP-binding protein SsuB of Escherichia coli (strain K12).